The sequence spans 116 residues: Large ribosomal subunit protein uL18 (116 aa).

Belongs to the universal ribosomal protein uL18 family. As to quaternary structure, part of the 50S ribosomal subunit; part of the 5S rRNA/L5/L18/L25 subcomplex. Contacts the 5S and 23S rRNAs.

In terms of biological role, this is one of the proteins that bind and probably mediate the attachment of the 5S RNA into the large ribosomal subunit, where it forms part of the central protuberance. The protein is Large ribosomal subunit protein uL18 of Shewanella sediminis (strain HAW-EB3).